Reading from the N-terminus, the 247-residue chain is Uridylate kinase (247 aa).

Residue 17 to 20 (KFSG) participates in ATP binding. G59 serves as a coordination point for UMP. G60 and R64 together coordinate ATP. Residues D79 and 140–147 (TGNPFFTT) contribute to the UMP site. ATP is bound by residues T167, Y173, and D176.

This sequence belongs to the UMP kinase family. In terms of assembly, homohexamer.

Its subcellular location is the cytoplasm. The enzyme catalyses UMP + ATP = UDP + ADP. It participates in pyrimidine metabolism; CTP biosynthesis via de novo pathway; UDP from UMP (UMPK route): step 1/1. With respect to regulation, inhibited by UTP. Catalyzes the reversible phosphorylation of UMP to UDP. The protein is Uridylate kinase of Legionella pneumophila subsp. pneumophila (strain Philadelphia 1 / ATCC 33152 / DSM 7513).